The sequence spans 616 residues: Dihydroxy-acid dehydratase (616 aa).

Asp-81 serves as a coordination point for Mg(2+). A [2Fe-2S] cluster-binding site is contributed by Cys-122. Positions 123 and 124 each coordinate Mg(2+). N6-carboxylysine is present on Lys-124. Cys-195 contacts [2Fe-2S] cluster. Glu-491 is a binding site for Mg(2+). Residue Ser-517 is the Proton acceptor of the active site.

The protein belongs to the IlvD/Edd family. As to quaternary structure, homodimer. The cofactor is [2Fe-2S] cluster. Requires Mg(2+) as cofactor.

It carries out the reaction (2R)-2,3-dihydroxy-3-methylbutanoate = 3-methyl-2-oxobutanoate + H2O. It catalyses the reaction (2R,3R)-2,3-dihydroxy-3-methylpentanoate = (S)-3-methyl-2-oxopentanoate + H2O. Its pathway is amino-acid biosynthesis; L-isoleucine biosynthesis; L-isoleucine from 2-oxobutanoate: step 3/4. It functions in the pathway amino-acid biosynthesis; L-valine biosynthesis; L-valine from pyruvate: step 3/4. Functions in the biosynthesis of branched-chain amino acids. Catalyzes the dehydration of (2R,3R)-2,3-dihydroxy-3-methylpentanoate (2,3-dihydroxy-3-methylvalerate) into 2-oxo-3-methylpentanoate (2-oxo-3-methylvalerate) and of (2R)-2,3-dihydroxy-3-methylbutanoate (2,3-dihydroxyisovalerate) into 2-oxo-3-methylbutanoate (2-oxoisovalerate), the penultimate precursor to L-isoleucine and L-valine, respectively. The protein is Dihydroxy-acid dehydratase of Pectobacterium atrosepticum (strain SCRI 1043 / ATCC BAA-672) (Erwinia carotovora subsp. atroseptica).